Consider the following 439-residue polypeptide: UDP-N-acetylglucosamine--N-acetylmuramyl-(pentapeptide) pyrophosphoryl-undecaprenol N-acetylglucosamine transferase (439 aa).

UDP-N-acetyl-alpha-D-glucosamine is bound by residues 25–27 (TGG), Arg218, Ser248, and Gln362.

The protein belongs to the glycosyltransferase 28 family. MurG subfamily.

It is found in the cell membrane. It carries out the reaction di-trans,octa-cis-undecaprenyl diphospho-N-acetyl-alpha-D-muramoyl-L-alanyl-D-glutamyl-meso-2,6-diaminopimeloyl-D-alanyl-D-alanine + UDP-N-acetyl-alpha-D-glucosamine = di-trans,octa-cis-undecaprenyl diphospho-[N-acetyl-alpha-D-glucosaminyl-(1-&gt;4)]-N-acetyl-alpha-D-muramoyl-L-alanyl-D-glutamyl-meso-2,6-diaminopimeloyl-D-alanyl-D-alanine + UDP + H(+). It participates in cell wall biogenesis; peptidoglycan biosynthesis. Cell wall formation. Catalyzes the transfer of a GlcNAc subunit on undecaprenyl-pyrophosphoryl-MurNAc-pentapeptide (lipid intermediate I) to form undecaprenyl-pyrophosphoryl-MurNAc-(pentapeptide)GlcNAc (lipid intermediate II). The protein is UDP-N-acetylglucosamine--N-acetylmuramyl-(pentapeptide) pyrophosphoryl-undecaprenol N-acetylglucosamine transferase of Roseiflexus sp. (strain RS-1).